The sequence spans 194 residues: High mobility group protein B4 (194 aa).

2 consecutive DNA-binding regions (HMG box) follow at residues 9-79 and 93-161; these read PKAN…MNYF and PRRP…SVYR.

It belongs to the HMGB family.

It is found in the nucleus. Its subcellular location is the chromosome. This Bos taurus (Bovine) protein is High mobility group protein B4 (HMGB4).